A 219-amino-acid chain; its full sequence is 2-hydroxy-3-keto-5-methylthiopentenyl-1-phosphate phosphatase (219 aa).

This sequence belongs to the HAD-like hydrolase superfamily. MtnX family.

It catalyses the reaction 2-hydroxy-5-methylsulfanyl-3-oxopent-1-enyl phosphate + H2O = 1,2-dihydroxy-5-(methylsulfanyl)pent-1-en-3-one + phosphate. Its pathway is amino-acid biosynthesis; L-methionine biosynthesis via salvage pathway; L-methionine from S-methyl-5-thio-alpha-D-ribose 1-phosphate: step 4/6. Functionally, dephosphorylates 2-hydroxy-3-keto-5-methylthiopentenyl-1-phosphate (HK-MTPenyl-1-P) yielding 1,2-dihydroxy-3-keto-5-methylthiopentene (DHK-MTPene). The sequence is that of 2-hydroxy-3-keto-5-methylthiopentenyl-1-phosphate phosphatase from Bacillus anthracis (strain A0248).